Here is a 196-residue protein sequence, read N- to C-terminus: Phosphoheptose isomerase (196 aa).

Residues 38 to 196 enclose the SIS domain; it reads LIAGYRAGAR…VEHALFAPRQ (159 aa). 53–55 provides a ligand contact to substrate; the sequence is NGG. Histidine 62 and glutamate 66 together coordinate Zn(2+). Substrate is bound by residues glutamate 66, 95-96, 121-123, serine 126, and glutamine 173; these read ND and STS. The Zn(2+) site is built by glutamine 173 and histidine 181.

Belongs to the SIS family. GmhA subfamily. The cofactor is Zn(2+).

It is found in the cytoplasm. It carries out the reaction 2 D-sedoheptulose 7-phosphate = D-glycero-alpha-D-manno-heptose 7-phosphate + D-glycero-beta-D-manno-heptose 7-phosphate. It participates in carbohydrate biosynthesis; D-glycero-D-manno-heptose 7-phosphate biosynthesis; D-glycero-alpha-D-manno-heptose 7-phosphate and D-glycero-beta-D-manno-heptose 7-phosphate from sedoheptulose 7-phosphate: step 1/1. Its function is as follows. Catalyzes the isomerization of sedoheptulose 7-phosphate in D-glycero-D-manno-heptose 7-phosphate. The sequence is that of Phosphoheptose isomerase from Mycobacterium bovis (strain ATCC BAA-935 / AF2122/97).